Here is a 205-residue protein sequence, read N- to C-terminus: MLTIALPKGRIGEDSLALFEKIFDTKFEFGKRKLILEAGGFRFMKVRNQDVPTYVYHQAADLGIVGLDVLEEKRLDIMRLLDLGFGRCDICIGIKAEESLDFSKPSYKVATKMENITRDFFSKKAIPVEIIKLYGSIELAPLVGLADMIVDIVETGETMRQNGLKPALKIMESSAFLIANKNSFYQKKAQILHLREQMSKVLYGS.

The protein belongs to the ATP phosphoribosyltransferase family. Short subfamily. Heteromultimer composed of HisG and HisZ subunits.

It localises to the cytoplasm. The enzyme catalyses 1-(5-phospho-beta-D-ribosyl)-ATP + diphosphate = 5-phospho-alpha-D-ribose 1-diphosphate + ATP. Its pathway is amino-acid biosynthesis; L-histidine biosynthesis; L-histidine from 5-phospho-alpha-D-ribose 1-diphosphate: step 1/9. Functionally, catalyzes the condensation of ATP and 5-phosphoribose 1-diphosphate to form N'-(5'-phosphoribosyl)-ATP (PR-ATP). Has a crucial role in the pathway because the rate of histidine biosynthesis seems to be controlled primarily by regulation of HisG enzymatic activity. The chain is ATP phosphoribosyltransferase from Nitratiruptor sp. (strain SB155-2).